We begin with the raw amino-acid sequence, 267 residues long: Type III pantothenate kinase (267 aa).

ATP is bound at residue 6–13 (DSGNSRLK). Residues Y96 and 103-106 (GADR) contribute to the substrate site. The active-site Proton acceptor is D105. T131 is a binding site for ATP. T181 serves as a coordination point for substrate.

Belongs to the type III pantothenate kinase family. Homodimer. It depends on NH4(+) as a cofactor. K(+) serves as cofactor.

It is found in the cytoplasm. The catalysed reaction is (R)-pantothenate + ATP = (R)-4'-phosphopantothenate + ADP + H(+). Its pathway is cofactor biosynthesis; coenzyme A biosynthesis; CoA from (R)-pantothenate: step 1/5. In terms of biological role, catalyzes the phosphorylation of pantothenate (Pan), the first step in CoA biosynthesis. This Bordetella bronchiseptica (strain ATCC BAA-588 / NCTC 13252 / RB50) (Alcaligenes bronchisepticus) protein is Type III pantothenate kinase.